The sequence spans 110 residues: DNA-binding protein Pars_1791 (110 aa).

This sequence belongs to the PDCD5 family.

This chain is DNA-binding protein Pars_1791, found in Pyrobaculum arsenaticum (strain DSM 13514 / JCM 11321 / PZ6).